A 220-amino-acid chain; its full sequence is Large ribosomal subunit protein uL10c (220 aa).

Residues 1–41 (MEVALLSFSSSLSPLCHQRISTLTPKTSNSPNYPRLPVIRS) constitute a chloroplast transit peptide.

Belongs to the universal ribosomal protein uL10 family. In terms of assembly, part of the 50S ribosomal subunit.

It is found in the plastid. The protein localises to the chloroplast. Functionally, this protein binds directly to 23S ribosomal RNA. In Arabidopsis thaliana (Mouse-ear cress), this protein is Large ribosomal subunit protein uL10c (RPL10).